Here is a 108-residue protein sequence, read N- to C-terminus: N(4)-acetylcytidine amidohydrolase (108 aa).

Residues 5–102 form the ASCH domain; it reads ITFFQRLERS…NDLFFISFRV (98 aa). Lys-20 acts as the Proton acceptor in catalysis. Residue Thr-23 is the Nucleophile of the active site. Glu-73 functions as the Proton donor in the catalytic mechanism.

It belongs to the N(4)-acetylcytidine amidohydrolase family.

It carries out the reaction N(4)-acetylcytidine + H2O = cytidine + acetate + H(+). The enzyme catalyses N(4)-acetyl-2'-deoxycytidine + H2O = 2'-deoxycytidine + acetate + H(+). It catalyses the reaction N(4)-acetylcytosine + H2O = cytosine + acetate + H(+). Its function is as follows. Catalyzes the hydrolysis of N(4)-acetylcytidine (ac4C). This is N(4)-acetylcytidine amidohydrolase from Moritella marina (Vibrio marinus).